A 655-amino-acid chain; its full sequence is Proprotein convertase subtilisin/kexin type 4 (655 aa).

The signal sequence occupies residues Met1–Ala26. Residues Gln27–Arg110 constitute a propeptide that is removed on maturation. The 315-residue stretch at Gln123–Val437 folds into the Peptidase S8 domain. Active-site charge relay system residues include Asp155, His196, and Ser370. One can recognise a P/Homo B domain in the interval Thr446–Asp580. An N-linked (GlcNAc...) asparagine glycan is attached at Asn472.

This sequence belongs to the peptidase S8 family. Furin subfamily. As to quaternary structure, the proPCSK4 form interacts with HSPA5; the interaction takes place at the endoplasmic reticulum. In terms of processing, N-glycosylated. Synthesized in the endoplasmic reticulum as a zymogen, is matured by autocatalytic cleavage between the prodomain and the catalytic domain. Expressed abundantly in the testis since postnatal Day 16. In testis, strongly detected in round and elongated spermatids as well as spermatocytes. Also observed in residual bodies engulfed by Sertoli cells at spermatogenic stages VIII and IX. In ovaries, expressed in macrophage-like cells of the ovarian theca, interstitium and corpora lutea.

Its subcellular location is the cytoplasmic vesicle. The protein resides in the secretory vesicle. The protein localises to the acrosome membrane. Functionally, proprotein convertase involved in the processing of hormone and other protein precursors at sites comprised of pairs of basic amino acid residues. In males, important for ADAM2 processing as well as other acrosomal proteins with roles in fertilization and critical for normal fertilization events such as sperm capacitation, acrosome reaction and binding of sperm to zona pellucida. Also plays a role in female fertility, involved in the regulation of trophoblast migration and placental development, may be through the proteolytical processing and activation of proteins such as IGF2. May also participate in folliculogenesis in the ovaries. This is Proprotein convertase subtilisin/kexin type 4 (Pcsk4) from Mus musculus (Mouse).